The primary structure comprises 206 residues: Heterochromatin protein 1 (206 aa).

2 disordered regions span residues 1–24 (MGKK…EEEY) and 47–145 (GYPE…GFDR). Residues Ser-11 and Ser-15 each carry the phosphoserine modification. In terms of domain architecture, Chromo 1 spans 24-82 (YAVEKIIDRRVRKGKVEYYLKWKGYPETENTWEPENNLDCQDLIQQYEASRKDEEKSAA). Over residues 50-60 (ETENTWEPENN) the composition is skewed to low complexity. Over residues 72–98 (ASRKDEEKSAASKKDRPSSSAKAKETQ) the composition is skewed to basic and acidic residues. The binds to Su(var)39 stretch occupies residues 95–206 (KETQGRASSS…RLSWYSDNED (112 aa)). Phosphoserine occurs at positions 102, 103, and 113. Phosphothreonine occurs at positions 127, 128, and 134. The region spanning 147–205 (LEAEKILGASDNNGRLTFLIQFKGVDQAEMVPSSVANEKIPRMVIHFYEERLSWYSDNE) is the Chromo 2 domain.

As to quaternary structure, homodimer. Probably associates with Su(var)3-9. Interacts with Mcm10. Interacts (via chromoshadow domain) with piwi (via N-terminal region). Interacts with Rrp6. Associates with and may be part of the HipHop-HOAP telomere capping complex but is not required for its stability or telomere localization. Interacts (via the chromo domain 2 (chromoshadow domain) and the hinge region between chromo domains 1 and 2) with cav/HOAP (via C-terminus); the interaction is direct. Each molecule of cav/HOAP interacts with 2 molecules of Su(var)205/HP1. Interacts with HipHop (via N-terminus). Interacts with moi/modigliani; the interaction is direct. Interacts (via chromo domain 1) with His3/histone 3 (via N-terminal tail methylated at 'Lys-10'); the interaction is direct. In terms of tissue distribution, salivary gland (at protein level).

It localises to the nucleus. Its subcellular location is the nucleoplasm. It is found in the chromosome. The protein localises to the telomere. In terms of biological role, structural component of heterochromatin, involved in gene repression and the modification of position-effect-variegation. Recognizes and binds histone H3 tails methylated at 'Lys-9', leading to epigenetic repression. Stabilizes chromatin-associated RNAs probably by binding to them and thereby preventing their degradation. Associates with, and may be a part of, the HipHop-HOAP complex that recruits the MTV complex to form the terminin telomere-capping complex, which binds to chromosome ends in a sequence-independent manner and prevents telomere fusion. Telomere capping is independent of the origin recognition complex (ORC). In Drosophila melanogaster (Fruit fly), this protein is Heterochromatin protein 1.